Consider the following 492-residue polypeptide: Probable cobyric acid synthase (492 aa).

The 193-residue stretch at 252–444 folds into the GATase cobBQ-type domain; the sequence is PIEVNVVKFS…FHGILENFEF (193 aa). The active-site Nucleophile is the Cys-330. His-436 is a catalytic residue.

This sequence belongs to the CobB/CobQ family. CobQ subfamily.

Its pathway is cofactor biosynthesis; adenosylcobalamin biosynthesis. Catalyzes amidations at positions B, D, E, and G on adenosylcobyrinic A,C-diamide. NH(2) groups are provided by glutamine, and one molecule of ATP is hydrogenolyzed for each amidation. In Methanococcus maripaludis (strain DSM 14266 / JCM 13030 / NBRC 101832 / S2 / LL), this protein is Probable cobyric acid synthase.